The primary structure comprises 257 residues: tRNA pseudouridine synthase A (257 aa).

Aspartate 53 (nucleophile) is an active-site residue. Tyrosine 111 serves as a coordination point for substrate.

Belongs to the tRNA pseudouridine synthase TruA family. Homodimer.

It carries out the reaction uridine(38/39/40) in tRNA = pseudouridine(38/39/40) in tRNA. Its function is as follows. Formation of pseudouridine at positions 38, 39 and 40 in the anticodon stem and loop of transfer RNAs. This chain is tRNA pseudouridine synthase A, found in Xanthomonas oryzae pv. oryzae (strain MAFF 311018).